Reading from the N-terminus, the 284-residue chain is Cytochrome P450 2C31 (284 aa).

Residue C229 coordinates heme.

The protein belongs to the cytochrome P450 family. It depends on heme as a cofactor.

The protein localises to the endoplasmic reticulum membrane. It localises to the microsome membrane. It catalyses the reaction an organic molecule + reduced [NADPH--hemoprotein reductase] + O2 = an alcohol + oxidized [NADPH--hemoprotein reductase] + H2O + H(+). Cytochromes P450 are a group of heme-thiolate monooxygenases. In liver microsomes, this enzyme is involved in an NADPH-dependent electron transport pathway. It oxidizes a variety of structurally unrelated compounds, including steroids, fatty acids, and xenobiotics. The sequence is that of Cytochrome P450 2C31 (CYP2C31) from Capra hircus aegagrus (Wild goat).